Here is a 294-residue protein sequence, read N- to C-terminus: 4-diphosphocytidyl-2-C-methyl-D-erythritol kinase (294 aa).

Lys11 is an active-site residue. An ATP-binding site is contributed by Pro96 to Ala106. Asp138 is a catalytic residue.

This sequence belongs to the GHMP kinase family. IspE subfamily.

It carries out the reaction 4-CDP-2-C-methyl-D-erythritol + ATP = 4-CDP-2-C-methyl-D-erythritol 2-phosphate + ADP + H(+). It participates in isoprenoid biosynthesis; isopentenyl diphosphate biosynthesis via DXP pathway; isopentenyl diphosphate from 1-deoxy-D-xylulose 5-phosphate: step 3/6. Its function is as follows. Catalyzes the phosphorylation of the position 2 hydroxy group of 4-diphosphocytidyl-2C-methyl-D-erythritol. This is 4-diphosphocytidyl-2-C-methyl-D-erythritol kinase from Rhodopseudomonas palustris (strain BisB5).